Reading from the N-terminus, the 59-residue chain is Potassium channel toxin alpha-KTx 15.4 (59 aa).

The signal sequence occupies residues Met1–Cys22. Residue Gln23 is modified to Pyrrolidone carboxylic acid. Intrachain disulfides connect Cys30/Cys50, Cys35/Cys55, and Cys39/Cys57.

Expressed by the venom gland.

Its subcellular location is the secreted. Blocker of A-type voltage-gated potassium channels of cerebellar granular cells. May also inhibit Kv4/KCND when coexpressed with DPP6 or DPP10. The occlusion of the outer entry of the K(+) conducting pore is partially reversible and affects both open and closed channels. It shares the same target in rat brain than BmTX3 (AC Q8I0L5) and AmmTX3 (AC P60208). This chain is Potassium channel toxin alpha-KTx 15.4, found in Androctonus australis (Sahara scorpion).